Consider the following 656-residue polypeptide: Very long-chain specific acyl-CoA dehydrogenase, mitochondrial (656 aa).

Residues 1–33 are disordered; sequence MQSARMTPSVGRQLLRLGARSSRSTTVLQGQPR. Residues 1 to 41 constitute a mitochondrion transit peptide; that stretch reads MQSARMTPSVGRQLLRLGARSSRSTTVLQGQPRPISAQRLY. Residues 42–483 are catalytic; it reads AREATQAVLD…ALQGCMDKGK (442 aa). Residue K52 is modified to N6-acetyllysine. Residues K72 and K128 each carry the N6-acetyllysine; alternate modification. Residues K72 and K128 each carry the N6-succinyllysine; alternate modification. N6-succinyllysine is present on K196. 215-224 lines the FAD pocket; sequence FCLTEPSSGS. C238 is modified (S-nitrosocysteine). An N6-acetyllysine; alternate modification is found at K240. K240 carries the N6-succinyllysine; alternate modification. Position 250–252 (250–252) interacts with FAD; it reads WIS. The residue at position 269 (K269) is an N6-succinyllysine. 2 positions are modified to N6-acetyllysine; alternate: K277 and K279. N6-succinyllysine; alternate is present on residues K277 and K279. K299 and K317 each carry N6-acetyllysine. K332 carries the post-translational modification N6-acetyllysine; alternate. Residue K332 is modified to N6-succinyllysine; alternate. K373 bears the N6-succinyllysine mark. 462-464 is a binding site for substrate; sequence FEG. E463 (proton acceptor) is an active-site residue. 465-467 contacts FAD; it reads AND. N6-acetyllysine; alternate is present on K483. Residue K483 is modified to N6-succinyllysine; alternate. Residues 484 to 517 form a membrane-anchoring region; sequence ELTGLGNALKNPFGNVGLLMGEAGKQLRRRTGIG. Residues S518 and S523 each carry the phosphoserine modification. Position 551 is an N6-acetyllysine (K551). K557 is subject to N6-acetyllysine; alternate. K557 is modified (N6-succinyllysine; alternate). Q563 contributes to the FAD binding site. Residue K640 is modified to N6-succinyllysine.

This sequence belongs to the acyl-CoA dehydrogenase family. Homodimer. Homodimerizes after import into the mitochondrion. It depends on FAD as a cofactor. S-nitrosylation at Cys-238 in liver improves catalytic efficiency.

The protein resides in the mitochondrion inner membrane. It carries out the reaction a very-long-chain 2,3-saturated fatty acyl-CoA + oxidized [electron-transfer flavoprotein] + H(+) = a very-long-chain (2E)-enoyl-CoA + reduced [electron-transfer flavoprotein]. The enzyme catalyses dodecanoyl-CoA + oxidized [electron-transfer flavoprotein] + H(+) = (2E)-dodecenoyl-CoA + reduced [electron-transfer flavoprotein]. The catalysed reaction is tetradecanoyl-CoA + oxidized [electron-transfer flavoprotein] + H(+) = (2E)-tetradecenoyl-CoA + reduced [electron-transfer flavoprotein]. It catalyses the reaction oxidized [electron-transfer flavoprotein] + hexadecanoyl-CoA + H(+) = (2E)-hexadecenoyl-CoA + reduced [electron-transfer flavoprotein]. It carries out the reaction octadecanoyl-CoA + oxidized [electron-transfer flavoprotein] + H(+) = (2E)-octadecenoyl-CoA + reduced [electron-transfer flavoprotein]. The enzyme catalyses eicosanoyl-CoA + oxidized [electron-transfer flavoprotein] + H(+) = (2E)-eicosenoyl-CoA + reduced [electron-transfer flavoprotein]. The catalysed reaction is docosanoyl-CoA + oxidized [electron-transfer flavoprotein] + H(+) = (2E)-docosenoyl-CoA + reduced [electron-transfer flavoprotein]. It catalyses the reaction tetracosanoyl-CoA + oxidized [electron-transfer flavoprotein] + H(+) = (2E)-tetracosenoyl-CoA + reduced [electron-transfer flavoprotein]. It functions in the pathway lipid metabolism; mitochondrial fatty acid beta-oxidation. Very long-chain specific acyl-CoA dehydrogenase is one of the acyl-CoA dehydrogenases that catalyze the first step of mitochondrial fatty acid beta-oxidation, an aerobic process breaking down fatty acids into acetyl-CoA and allowing the production of energy from fats. The first step of fatty acid beta-oxidation consists in the removal of one hydrogen from C-2 and C-3 of the straight-chain fatty acyl-CoA thioester, resulting in the formation of trans-2-enoyl-CoA. Among the different mitochondrial acyl-CoA dehydrogenases, very long-chain specific acyl-CoA dehydrogenase acts specifically on acyl-CoAs with saturated 12 to 24 carbons long primary chains. In Mus musculus (Mouse), this protein is Very long-chain specific acyl-CoA dehydrogenase, mitochondrial.